An 874-amino-acid chain; its full sequence is Tyrosine-protein kinase receptor TYRO3 (874 aa).

A signal peptide spans 1–20; sequence MEVSLCILLFLLHFNEGIHG. Ig-like C2-type domains follow at residues 21 to 106 and 117 to 198; these read VRFT…IISS and PHFG…GTVH. Over 21-411 the chain is Extracellular; the sequence is VRFTQKPFHQ…QAQTQRGHMW (391 aa). Cysteines 42 and 95 form a disulfide. N-linked (GlcNAc...) asparagine glycans are attached at residues Asn135, Asn174, Asn217, Asn270, Asn305, and Asn373. Residues Cys138 and Cys181 are joined by a disulfide bond. Fibronectin type-III domains are found at residues 202–297 and 299–403; these read RPDS…TPQA and PSAA…AMQA. The helical transmembrane segment at 412–432 threads the bilayer; that stretch reads VGLLFGLLVATMVGLLLIVLI. Over 433–874 the chain is Cytoplasmic; the sequence is RNRGKETQFG…EEEEDVIINV (442 aa). Positions 497-768 constitute a Protein kinase domain; that stretch reads LTLGRMLGKG…QHLIDQLELL (272 aa). ATP is bound by residues 503-511 and Lys529; that span reads LGKGEFGSV. The active-site Proton acceptor is Asp634. Tyr665 carries the phosphotyrosine; by autocatalysis modification.

It belongs to the protein kinase superfamily. Tyr protein kinase family. AXL/UFO subfamily.

The protein localises to the cell membrane. The catalysed reaction is L-tyrosyl-[protein] + ATP = O-phospho-L-tyrosyl-[protein] + ADP + H(+). Functionally, may be involved in cell adhesion processes, particularly in the central nervous system. The chain is Tyrosine-protein kinase receptor TYRO3 (tyro3) from Danio rerio (Zebrafish).